A 170-amino-acid chain; its full sequence is Adenine phosphoribosyltransferase (170 aa).

It belongs to the purine/pyrimidine phosphoribosyltransferase family. In terms of assembly, homodimer.

Its subcellular location is the cytoplasm. The catalysed reaction is AMP + diphosphate = 5-phospho-alpha-D-ribose 1-diphosphate + adenine. Its pathway is purine metabolism; AMP biosynthesis via salvage pathway; AMP from adenine: step 1/1. Its function is as follows. Catalyzes a salvage reaction resulting in the formation of AMP, that is energically less costly than de novo synthesis. The protein is Adenine phosphoribosyltransferase of Bacillus cereus (strain G9842).